Reading from the N-terminus, the 152-residue chain is Probable ribose-5-phosphate isomerase B (152 aa).

12-13 (DH) lines the D-ribulose 5-phosphate pocket. Cys70 (proton acceptor) is an active-site residue. 71–75 (GTGVG) contacts D-ribulose 5-phosphate. The Proton donor role is filled by His103. 4 residues coordinate D-ribulose 5-phosphate: Asp104, Arg114, Arg137, and Arg141.

The protein belongs to the LacAB/RpiB family. In terms of assembly, homodimer.

It catalyses the reaction aldehydo-D-ribose 5-phosphate = D-ribulose 5-phosphate. It functions in the pathway carbohydrate degradation; pentose phosphate pathway; D-ribose 5-phosphate from D-ribulose 5-phosphate (non-oxidative stage): step 1/1. Catalyzes the interconversion of ribulose-5-P and ribose-5-P. This is Probable ribose-5-phosphate isomerase B from Mycoplasma pneumoniae (strain ATCC 29342 / M129 / Subtype 1) (Mycoplasmoides pneumoniae).